We begin with the raw amino-acid sequence, 117 residues long: uncharacterized protein (117 aa).

Residues 4 to 26 (VLNFHFSYIYTYFITITTNYKYG) traverse the membrane as a helical segment.

The protein localises to the host membrane. This is an uncharacterized protein from Sulfolobus islandicus rod-shaped virus 1 (SIRV-1).